A 339-amino-acid polypeptide reads, in one-letter code: GTP 3',8-cyclase (339 aa).

The 237-residue stretch at 13–249 (RYGRPLRDLR…GEVAQRHAFA (237 aa)) folds into the Radical SAM core domain. R22 is a GTP binding site. Residues C29 and C33 each contribute to the [4Fe-4S] cluster site. Y35 is an S-adenosyl-L-methionine binding site. C36 lines the [4Fe-4S] cluster pocket. Residue R75 participates in GTP binding. G79 provides a ligand contact to S-adenosyl-L-methionine. T106 contacts GTP. Position 130 (S130) interacts with S-adenosyl-L-methionine. A GTP-binding site is contributed by K168. M202 is a binding site for S-adenosyl-L-methionine. Residues C266 and C269 each contribute to the [4Fe-4S] cluster site. 271–273 (RAR) lines the GTP pocket. Position 283 (C283) interacts with [4Fe-4S] cluster.

The protein belongs to the radical SAM superfamily. MoaA family. Monomer and homodimer. [4Fe-4S] cluster is required as a cofactor.

It carries out the reaction GTP + AH2 + S-adenosyl-L-methionine = (8S)-3',8-cyclo-7,8-dihydroguanosine 5'-triphosphate + 5'-deoxyadenosine + L-methionine + A + H(+). It participates in cofactor biosynthesis; molybdopterin biosynthesis. Catalyzes the cyclization of GTP to (8S)-3',8-cyclo-7,8-dihydroguanosine 5'-triphosphate. In Xanthomonas campestris pv. campestris (strain 8004), this protein is GTP 3',8-cyclase.